The sequence spans 319 residues: MAAQYYMEFEKPVVELEKKVQELAELAGTNAELAGEVTKLEKKVDRMREVIFSNLSRWQTVQVARHIERPFTLDYLNLIFTDFTELHGDRLFGDDHAIVAGLAKLDGEPVVVIGHQKGRDTKEKVYRNFGMPNPEGYRKALRIMELAERFRLPIITFVDTPGAFPGIGAEERGQAEAIARNLREMAALTVPIIVVVTGEGGSGGALAIAVGDRVLMLQYSIYAVISPEGCAAILWSDGTKGEQAAEALKLTAKDLKELEVIDEIVPEPLGGAHRDHEAMARTLHEAIARQLKELKAIPAEQLVEERYQKFRKMSRFIEG.

The 255-residue stretch at 39 to 293 (KLEKKVDRMR…HEAIARQLKE (255 aa)) folds into the CoA carboxyltransferase C-terminal domain.

This sequence belongs to the AccA family. Acetyl-CoA carboxylase is a heterohexamer composed of biotin carboxyl carrier protein (AccB), biotin carboxylase (AccC) and two subunits each of ACCase subunit alpha (AccA) and ACCase subunit beta (AccD).

It localises to the cytoplasm. It carries out the reaction N(6)-carboxybiotinyl-L-lysyl-[protein] + acetyl-CoA = N(6)-biotinyl-L-lysyl-[protein] + malonyl-CoA. It participates in lipid metabolism; malonyl-CoA biosynthesis; malonyl-CoA from acetyl-CoA: step 1/1. Component of the acetyl coenzyme A carboxylase (ACC) complex. First, biotin carboxylase catalyzes the carboxylation of biotin on its carrier protein (BCCP) and then the CO(2) group is transferred by the carboxyltransferase to acetyl-CoA to form malonyl-CoA. This chain is Acetyl-coenzyme A carboxylase carboxyl transferase subunit alpha, found in Geobacter sulfurreducens (strain ATCC 51573 / DSM 12127 / PCA).